The sequence spans 360 residues: MSGKTFLVMAGGTGGHVYPALASALALREQGANVVWLGARGGMEERIIGRTDIPMRLITIGGLRGKGVAALLMAPVNLVRALWQAFSVFRKEKPDCVLGMGGFASGPGGIVACLTGTPLVIHEQNAIAGMTNRWLARGARYVLEAFPQTFAQAQSVVTVGNPVRDELAALPSPQERGIGARKPTLLILGGSRGALALNEAAPKAIAALPETLRPRVVHQAGEGKDQTCRELYASLGVEAEVYDFLQDMASVYANADLALCRAGALTLAELCTVGLGALLAPYPHAVDDHQTANARHLEQAGAAKIFQQDNLTVERLAETLTSLLGQPQKLLDMANAARTLAKPEATREVVKYCWEACAND.

Residues 13–15, Asn125, Arg164, Ser191, and Gln290 each bind UDP-N-acetyl-alpha-D-glucosamine; that span reads TGG.

This sequence belongs to the glycosyltransferase 28 family. MurG subfamily.

It is found in the cell inner membrane. The enzyme catalyses di-trans,octa-cis-undecaprenyl diphospho-N-acetyl-alpha-D-muramoyl-L-alanyl-D-glutamyl-meso-2,6-diaminopimeloyl-D-alanyl-D-alanine + UDP-N-acetyl-alpha-D-glucosamine = di-trans,octa-cis-undecaprenyl diphospho-[N-acetyl-alpha-D-glucosaminyl-(1-&gt;4)]-N-acetyl-alpha-D-muramoyl-L-alanyl-D-glutamyl-meso-2,6-diaminopimeloyl-D-alanyl-D-alanine + UDP + H(+). It functions in the pathway cell wall biogenesis; peptidoglycan biosynthesis. Cell wall formation. Catalyzes the transfer of a GlcNAc subunit on undecaprenyl-pyrophosphoryl-MurNAc-pentapeptide (lipid intermediate I) to form undecaprenyl-pyrophosphoryl-MurNAc-(pentapeptide)GlcNAc (lipid intermediate II). The sequence is that of UDP-N-acetylglucosamine--N-acetylmuramyl-(pentapeptide) pyrophosphoryl-undecaprenol N-acetylglucosamine transferase from Hahella chejuensis (strain KCTC 2396).